The sequence spans 313 residues: MVRDIDKTTSLHLNNEAQFLCFRLDAEKDAQLYGMNIFKIREIIHYDGEVTEILGGSDGVMLGFLSVRGESIPLVDVKRWLHYNANDPSRDLKECSVKDDHNLVIVCHFSNHSIALKVLKIERIIHKNWTEISAGDKQGINEEGKLSAITRFDEERVVQILDVEKMISDVFPSLKDLDDLTLRCIEAIQSQKLILIAEDSLSALKTLEKIVQTLELRYLAFPNGRELLDYLYEKEHYQQVGVVITDLEMPNISGFEVLKTIKADHRTEHLPVIINSSMSSDSNRQLAQSLEADGFVVKSNILEIHEMLKKTLS.

One can recognise a CheW-like domain in the interval glutamate 16–proline 172. The 121-residue stretch at leucine 193 to serine 313 folds into the Response regulatory domain. At aspartate 246 the chain carries 4-aspartylphosphate.

Phosphorylated; probably by transfer of CheAY phosphate group.

Functionally, plays a role in chemotaxis signal transduction system in order to colonize the host stomach. May act as a phosphate sink to control the flow of phosphate to CheAY. The chain is Chemotaxis protein CheV2 from Helicobacter pylori (strain ATCC 700392 / 26695) (Campylobacter pylori).